The primary structure comprises 164 residues: MSSESKLILIGIISSPYGIRGQVAIKSFTDPASNILNYELKDYRKNIIKIHSAKILSKKIICNIDQIVTRTAAEQLTRTKLYIYKHELPQLPDSEYYVANLNGIKVKNLEGEIIGKINNICNYNAGDIIEVVYNDGKKIMYPFTNEIFPQITEDFVVIVPPEFI.

In terms of domain architecture, PRC barrel spans P92–I164.

It belongs to the RimM family. In terms of assembly, binds ribosomal protein uS19.

The protein resides in the cytoplasm. In terms of biological role, an accessory protein needed during the final step in the assembly of 30S ribosomal subunit, possibly for assembly of the head region. Essential for efficient processing of 16S rRNA. May be needed both before and after RbfA during the maturation of 16S rRNA. It has affinity for free ribosomal 30S subunits but not for 70S ribosomes. The sequence is that of Ribosome maturation factor RimM from Orientia tsutsugamushi (strain Ikeda) (Rickettsia tsutsugamushi).